Reading from the N-terminus, the 194-residue chain is Small ribosomal subunit protein uS4c (194 aa).

One can recognise an S4 RNA-binding domain in the interval Met82 to Asn143.

The protein belongs to the universal ribosomal protein uS4 family. In terms of assembly, part of the 30S ribosomal subunit. Contacts protein S5. The interaction surface between S4 and S5 is involved in control of translational fidelity.

It is found in the plastid. It localises to the chloroplast. In terms of biological role, one of the primary rRNA binding proteins, it binds directly to 16S rRNA where it nucleates assembly of the body of the 30S subunit. Its function is as follows. With S5 and S12 plays an important role in translational accuracy. The chain is Small ribosomal subunit protein uS4c (rps4) from Cypella sp. (strain Porto Alegre 027).